The primary structure comprises 496 residues: Cytochrome P450 4ae1 (496 aa).

Heme is bound at residue cysteine 443.

Belongs to the cytochrome P450 family. It depends on heme as a cofactor.

It is found in the endoplasmic reticulum membrane. It localises to the microsome membrane. Its function is as follows. May be involved in the metabolism of insect hormones and in the breakdown of synthetic insecticides. The polypeptide is Cytochrome P450 4ae1 (Cyp4ae1) (Drosophila melanogaster (Fruit fly)).